Here is a 266-residue protein sequence, read N- to C-terminus: Outer membrane protein OmpK (266 aa).

The N-terminal stretch at 1–20 is a signal peptide; the sequence is MRKSLLALSLLAATSAPVLA.

Belongs to the nucleoside-specific channel-forming outer membrane porin (Tsx) (TC 1.B.10) family.

The protein resides in the cell outer membrane. Functionally, serves as receptor for a broad-host-range vibriophage, KVP40. The polypeptide is Outer membrane protein OmpK (ompK) (Vibrio parahaemolyticus serotype O3:K6 (strain RIMD 2210633)).